A 793-amino-acid chain; its full sequence is Probable phosphoketolase (793 aa).

The protein belongs to the XFP family. Requires thiamine diphosphate as cofactor.

This is Probable phosphoketolase from Streptomyces avermitilis (strain ATCC 31267 / DSM 46492 / JCM 5070 / NBRC 14893 / NCIMB 12804 / NRRL 8165 / MA-4680).